The following is a 312-amino-acid chain: Methionyl-tRNA formyltransferase (312 aa).

Ser-109–Pro-112 serves as a coordination point for (6S)-5,6,7,8-tetrahydrofolate.

The protein belongs to the Fmt family.

The enzyme catalyses L-methionyl-tRNA(fMet) + (6R)-10-formyltetrahydrofolate = N-formyl-L-methionyl-tRNA(fMet) + (6S)-5,6,7,8-tetrahydrofolate + H(+). Attaches a formyl group to the free amino group of methionyl-tRNA(fMet). The formyl group appears to play a dual role in the initiator identity of N-formylmethionyl-tRNA by promoting its recognition by IF2 and preventing the misappropriation of this tRNA by the elongation apparatus. In Listeria monocytogenes serotype 4b (strain CLIP80459), this protein is Methionyl-tRNA formyltransferase.